Consider the following 464-residue polypeptide: GTPase Der (464 aa).

2 EngA-type G domains span residues 5–169 (PTIA…KQKG) and 190–368 (IKVA…RESH). Residues 11–18 (GRPNVGKS), 58–62 (DTGGI), 121–124 (NKAD), 196–203 (GRPNAGKS), 243–247 (DTAGM), and 308–311 (NKFD) each bind GTP. In terms of domain architecture, KH-like spans 369-461 (NLPTTGQLNR…PVIFSARSRV (93 aa)).

This sequence belongs to the TRAFAC class TrmE-Era-EngA-EngB-Septin-like GTPase superfamily. EngA (Der) GTPase family. As to quaternary structure, associates with the 50S ribosomal subunit.

Its function is as follows. GTPase that plays an essential role in the late steps of ribosome biogenesis. This chain is GTPase Der, found in Akkermansia muciniphila (strain ATCC BAA-835 / DSM 22959 / JCM 33894 / BCRC 81048 / CCUG 64013 / CIP 107961 / Muc).